The sequence spans 38 residues: uncharacterized protein (38 aa).

This is an uncharacterized protein from Archaeoglobus fulgidus (strain ATCC 49558 / DSM 4304 / JCM 9628 / NBRC 100126 / VC-16).